Reading from the N-terminus, the 257-residue chain is Beta-fibrinogenase mucrofibrase-5 (257 aa).

Residues 1–18 (MVLIRVLANLLILQLSYA) form the signal peptide. The propeptide occupies 19-24 (QKSSEL). Positions 25–248 (IIGGDECNIN…HLDWIKGIIA (224 aa)) constitute a Peptidase S1 domain. Disulfide bonds link cysteine 31–cysteine 162, cysteine 49–cysteine 65, cysteine 97–cysteine 255, cysteine 141–cysteine 209, cysteine 173–cysteine 188, and cysteine 199–cysteine 224. Histidine 64 acts as the Charge relay system in catalysis. Residue asparagine 102 is glycosylated (N-linked (GlcNAc...) asparagine). The active-site Charge relay system is aspartate 109. Serine 203 acts as the Charge relay system in catalysis.

This sequence belongs to the peptidase S1 family. Snake venom subfamily. In terms of assembly, monomer. As to expression, expressed by the venom gland.

The protein localises to the secreted. Its function is as follows. Snake venom serine protease with strong beta-fibrinogenolytic activities, angiotensin I (AGT)-degrading activities and strong kallikrein-like activities in vitro, releasing bradykinin from kininogen (KNG1). Intravenous injection mildly lowers blood pressure in experimental rats, which may be explained by the action on angiotensin I and kininogen. Exhibits amidase activity against N-benzoyl-Pro-Phe-Arg-p-nitroanilide in vitro. This is Beta-fibrinogenase mucrofibrase-5 from Protobothrops mucrosquamatus (Taiwan habu).